The sequence spans 509 residues: 2,3-bisphosphoglycerate-independent phosphoglycerate mutase (509 aa).

Residues Asp-14 and Ser-64 each contribute to the Mn(2+) site. Ser-64 acts as the Phosphoserine intermediate in catalysis. Substrate-binding positions include His-125, 155 to 156, Arg-187, Arg-193, 259 to 262, and Lys-332; these read RD and RADR. Mn(2+) is bound by residues Asp-399, His-403, Asp-440, His-441, and His-459.

Belongs to the BPG-independent phosphoglycerate mutase family. In terms of assembly, monomer. The cofactor is Mn(2+).

The enzyme catalyses (2R)-2-phosphoglycerate = (2R)-3-phosphoglycerate. It functions in the pathway carbohydrate degradation; glycolysis; pyruvate from D-glyceraldehyde 3-phosphate: step 3/5. Its function is as follows. Catalyzes the interconversion of 2-phosphoglycerate and 3-phosphoglycerate. The chain is 2,3-bisphosphoglycerate-independent phosphoglycerate mutase from Aeromonas salmonicida (strain A449).